A 124-amino-acid chain; its full sequence is U13-hexatoxin-Mg1a (124 aa).

The first 17 residues, 1-17 (MKLSALVFVASVMLVAA), serve as a signal peptide directing secretion. A propeptide spanning residues 18-52 (SPVKDVEEPVETHLAADLKTIEELAKYEEAAVQKR) is cleaved from the precursor. Disulfide bonds link C54/C72, C65/C78, C69/C116, and C71/C87.

As to expression, expressed by the venom gland.

Its subcellular location is the secreted. In terms of biological role, no toxicity is observed upon intracranial injection into mice and intrathorax injection into crickets. In Macrothele gigas (Japanese funnel web spider), this protein is U13-hexatoxin-Mg1a.